Here is an 89-residue protein sequence, read N- to C-terminus: uncharacterized protein (89 aa).

The protein to M.jannaschii MJ1436.

This is an uncharacterized protein from Methanothermobacter thermautotrophicus (strain ATCC 29096 / DSM 1053 / JCM 10044 / NBRC 100330 / Delta H) (Methanobacterium thermoautotrophicum).